The following is a 559-amino-acid chain: MAAVGASATPLTNTKSTAEPVRPVANFPPSVWGDLFLSFSLDKSIMEEYAEAMEEPKEQVRRLILDPTMDSNKKLSLIYTVHRLGLTYMFLKEIEAQLDRLFKEFNLEDYVELDLYTISINFQAFRHLGYKLPCDVFNKFKNDDSTTFKESITGDVRGMLGLYESAQLRLKGENILDEASAFAETKLKSLVNTLEGSLAQQVKQSLRRPFHQGMPMVEARLYFSNYQEECSAHDSILKLAKLHFNYLQLQQKEELRIVSQWWKDMRFQETTPYIRDRVPEIYLWILGLYFEPRYSLARIIATKITLFLVVLDDTYDAYATIEEIRLLTDAINRWDISAMNQIPEYIRPFYKILLDEYAELEKQLAKEGRANSVIASKEAFQDIARGYLEEAEWTNSGYVASFPEYMKNGLITSAYNVISKSALVGMGEIVSEDALVWYESHPQILQASELISRLQDDVMTYQFERERGQSATGVDSYIKTYGVSEKVAIDELKKMIENAWKEINEGCLKPREVSMDLLAPILNLARMIDVVYRYDDGFTFPGKTLKEYITLLFVGSSPM.

The Mg(2+) site is built by Asp312, Asp316, Asp456, Thr460, and Glu464. The DDXXD motif motif lies at 312–316; sequence DDTYD.

Belongs to the terpene synthase family. Monomer. It depends on Mg(2+) as a cofactor. Mainly expressed in sunflower trichomes.

It catalyses the reaction (2E,6E)-farnesyl diphosphate = (+)-(R)-germacrene A + diphosphate. Its pathway is secondary metabolite biosynthesis; terpenoid biosynthesis. Sesquiterpene synthase involved in germacrene A biosynthesis. Germacrene A is a precursor of several sesquiterpene lactones. The polypeptide is Germacrene A synthase 1 (Helianthus annuus (Common sunflower)).